The chain runs to 185 residues: Protein N-terminal glutamine amidohydrolase (185 aa).

Catalysis depends on residues cysteine 14, histidine 62, and aspartate 78.

The protein belongs to the NTAQ1 family. Monomer.

It carries out the reaction N-terminal L-glutaminyl-[protein] + H2O = N-terminal L-glutamyl-[protein] + NH4(+). Its function is as follows. Mediates the side-chain deamidation of N-terminal glutamine residues to glutamate, an important step in N-end rule pathway of protein degradation. Conversion of the resulting N-terminal glutamine to glutamate renders the protein susceptible to arginylation, polyubiquitination and degradation as specified by the N-end rule. Does not act on substrates with internal or C-terminal glutamine and does not act on non-glutamine residues in any position. This Caenorhabditis briggsae protein is Protein N-terminal glutamine amidohydrolase.